Reading from the N-terminus, the 363-residue chain is Carbamoyl phosphate synthase small chain (363 aa).

Residues 1 to 171 (MEDGTLFAGA…PYRIPGPGPR (171 aa)) form a CPSase region. 3 residues coordinate L-glutamine: serine 39, glycine 219, and glycine 221. The region spanning 171–359 (RVVAVDFGAK…LALVDRSAVS (189 aa)) is the Glutamine amidotransferase type-1 domain. Residue cysteine 248 is the Nucleophile of the active site. L-glutamine-binding residues include leucine 249, glutamine 252, asparagine 290, glycine 292, and tyrosine 293. Active-site residues include histidine 332 and glutamate 334.

Belongs to the CarA family. As to quaternary structure, composed of two chains; the small (or glutamine) chain promotes the hydrolysis of glutamine to ammonia, which is used by the large (or ammonia) chain to synthesize carbamoyl phosphate. Tetramer of heterodimers (alpha,beta)4.

The enzyme catalyses hydrogencarbonate + L-glutamine + 2 ATP + H2O = carbamoyl phosphate + L-glutamate + 2 ADP + phosphate + 2 H(+). The catalysed reaction is L-glutamine + H2O = L-glutamate + NH4(+). It participates in amino-acid biosynthesis; L-arginine biosynthesis; carbamoyl phosphate from bicarbonate: step 1/1. Its pathway is pyrimidine metabolism; UMP biosynthesis via de novo pathway; (S)-dihydroorotate from bicarbonate: step 1/3. In terms of biological role, small subunit of the glutamine-dependent carbamoyl phosphate synthetase (CPSase). CPSase catalyzes the formation of carbamoyl phosphate from the ammonia moiety of glutamine, carbonate, and phosphate donated by ATP, constituting the first step of 2 biosynthetic pathways, one leading to arginine and/or urea and the other to pyrimidine nucleotides. The small subunit (glutamine amidotransferase) binds and cleaves glutamine to supply the large subunit with the substrate ammonia. The sequence is that of Carbamoyl phosphate synthase small chain from Symbiobacterium thermophilum (strain DSM 24528 / JCM 14929 / IAM 14863 / T).